The primary structure comprises 208 residues: High frequency lysogenization protein HflD homolog (208 aa).

Belongs to the HflD family.

Its subcellular location is the cytoplasm. The protein localises to the cell inner membrane. This is High frequency lysogenization protein HflD homolog from Pseudomonas entomophila (strain L48).